Here is a 274-residue protein sequence, read N- to C-terminus: Diaminopimelate epimerase (274 aa).

Substrate-binding residues include asparagine 11, glutamine 44, and asparagine 64. Cysteine 73 functions as the Proton donor in the catalytic mechanism. Residues 74-75, asparagine 157, asparagine 190, and 208-209 contribute to the substrate site; these read GN and ER. Cysteine 217 (proton acceptor) is an active-site residue. 218 to 219 provides a ligand contact to substrate; the sequence is GS.

It belongs to the diaminopimelate epimerase family. As to quaternary structure, homodimer.

It localises to the cytoplasm. It catalyses the reaction (2S,6S)-2,6-diaminopimelate = meso-2,6-diaminopimelate. It participates in amino-acid biosynthesis; L-lysine biosynthesis via DAP pathway; DL-2,6-diaminopimelate from LL-2,6-diaminopimelate: step 1/1. Functionally, catalyzes the stereoinversion of LL-2,6-diaminopimelate (L,L-DAP) to meso-diaminopimelate (meso-DAP), a precursor of L-lysine and an essential component of the bacterial peptidoglycan. The protein is Diaminopimelate epimerase of Shigella flexneri serotype 5b (strain 8401).